Consider the following 70-residue polypeptide: Small ribosomal subunit protein bS21 (70 aa).

It belongs to the bacterial ribosomal protein bS21 family.

The chain is Small ribosomal subunit protein bS21 (rpsU) from Helicobacter pylori (strain J99 / ATCC 700824) (Campylobacter pylori J99).